A 106-amino-acid chain; its full sequence is ATP-dependent Clp protease adapter protein ClpS (106 aa).

It belongs to the ClpS family. In terms of assembly, binds to the N-terminal domain of the chaperone ClpA.

In terms of biological role, involved in the modulation of the specificity of the ClpAP-mediated ATP-dependent protein degradation. The sequence is that of ATP-dependent Clp protease adapter protein ClpS from Photobacterium profundum (strain SS9).